The primary structure comprises 165 residues: UI (165 aa).

The signal sequence occupies residues 1 to 18 (MKPVPLILLLATVLLSSH). A Valine amide modification is found at Val-163.

It belongs to the sauvagine/corticotropin-releasing factor/urotensin I family.

It localises to the secreted. Functionally, urotensin is found in the teleost caudal neurosecretory system. It has a suggested role in osmoregulation and as a corticotropin-releasing factor. The non-hormonal portion of this precursor may be a urotensin binding protein, urophysin. The sequence is that of UI from Oncorhynchus mykiss (Rainbow trout).